Here is a 360-residue protein sequence, read N- to C-terminus: MSGKTFLVMAGGTGGHVYPALASALALREQGANVVWLGARGGMEERIIGRTDIPMRLITIGGLRGKGVAALLMAPVNLVRALWQAFSVFRKEKPDCVLGMGGFASGPGGIVACLTGTPLVIHEQNAIAGMTNRWLARGARYVLEAFPQTFAQAQSVVTVGNPVRDELAALPSPQERGIGARKPTLLILGGSRGALALNEAAPKAIAALPETLRPRVVHQAGEGKDQTCRELYASLGVEAEVYDFLQDMASVYANADLALCRAGALTLAELCTVGLGALLAPYPHAVDDHQTANARHLEQAGAAKIFQQDNLTVERLAETLTSLLGQPQKLLDMANAARTLAKPEATREVVKYCWEACAND.

UDP-N-acetyl-alpha-D-glucosamine-binding positions include 13–15 (TGG), Asn125, Arg164, Ser191, and Gln290.

This sequence belongs to the glycosyltransferase 28 family. MurG subfamily.

Its subcellular location is the cell inner membrane. The enzyme catalyses di-trans,octa-cis-undecaprenyl diphospho-N-acetyl-alpha-D-muramoyl-L-alanyl-D-glutamyl-meso-2,6-diaminopimeloyl-D-alanyl-D-alanine + UDP-N-acetyl-alpha-D-glucosamine = di-trans,octa-cis-undecaprenyl diphospho-[N-acetyl-alpha-D-glucosaminyl-(1-&gt;4)]-N-acetyl-alpha-D-muramoyl-L-alanyl-D-glutamyl-meso-2,6-diaminopimeloyl-D-alanyl-D-alanine + UDP + H(+). It functions in the pathway cell wall biogenesis; peptidoglycan biosynthesis. Cell wall formation. Catalyzes the transfer of a GlcNAc subunit on undecaprenyl-pyrophosphoryl-MurNAc-pentapeptide (lipid intermediate I) to form undecaprenyl-pyrophosphoryl-MurNAc-(pentapeptide)GlcNAc (lipid intermediate II). This chain is UDP-N-acetylglucosamine--N-acetylmuramyl-(pentapeptide) pyrophosphoryl-undecaprenol N-acetylglucosamine transferase, found in Hahella chejuensis (strain KCTC 2396).